We begin with the raw amino-acid sequence, 785 residues long: 5-methyltetrahydropteroyltriglutamate--homocysteine methyltransferase (785 aa).

Residues 15-18 (RELK) and lysine 121 each bind 5-methyltetrahydropteroyltri-L-glutamate. L-homocysteine contacts are provided by residues 460-462 (IGS) and glutamate 513. L-methionine is bound by residues 460 to 462 (IGS) and glutamate 513. 5-methyltetrahydropteroyltri-L-glutamate is bound by residues 544-545 (RC) and tryptophan 590. Aspartate 628 is a binding site for L-homocysteine. Aspartate 628 lines the L-methionine pocket. Glutamate 634 provides a ligand contact to 5-methyltetrahydropteroyltri-L-glutamate. Zn(2+)-binding residues include histidine 670, cysteine 672, and glutamate 694. Catalysis depends on histidine 723, which acts as the Proton donor. Residue cysteine 755 coordinates Zn(2+).

The protein belongs to the vitamin-B12 independent methionine synthase family. It depends on Zn(2+) as a cofactor.

The catalysed reaction is 5-methyltetrahydropteroyltri-L-glutamate + L-homocysteine = tetrahydropteroyltri-L-glutamate + L-methionine. It functions in the pathway amino-acid biosynthesis; L-methionine biosynthesis via de novo pathway; L-methionine from L-homocysteine (MetE route): step 1/1. In terms of biological role, catalyzes the transfer of a methyl group from 5-methyltetrahydrofolate to homocysteine resulting in methionine formation. The polypeptide is 5-methyltetrahydropteroyltriglutamate--homocysteine methyltransferase (Nitratidesulfovibrio vulgaris (strain ATCC 29579 / DSM 644 / CCUG 34227 / NCIMB 8303 / VKM B-1760 / Hildenborough) (Desulfovibrio vulgaris)).